A 550-amino-acid chain; its full sequence is MKLDEEFLHDRDHSFLTDDEENQAALACSDDEHDGDDDGRRGGENSDSSSPLSRDRSDNNLSDVSNPPWPQSYRQSMDLLTGMTPPSVSFMPQSSSRRLASSFQKKQQSSFCDSLSSSSSKPLLSQPVPDKEETILPVNPQSQLKLSVTDLPLPEPNLCSFSQSVLNGTNVLCGLGLITMPYAIKESGWLGLPILLFFGVITCYTGVLMKRCLESSPGIQTYPDIGQAAFGITGRFIISILLYVELYAACVEYIIMMSDNLSGLFPNVSLSIASGISLDSPQIFAILTTLLVLPTVWLKDLSLLSYLSVGGVLASILLGICLFWVGAVDGIGFHATGRVFDLSNLPVTIGIFGFGYSGHSVFPNIYSSMKDPSRFPLVLVICFSFCTVLYIAVAVCGYTMFGEAVESQFTLNMPKHFFPSKVAVWTAVITPMTKYALTITPIVMSLEELIPTAKMRSRGVSILFRTMLVTSTLVVALSVPFFAIVAALIGSFLAMLVALIFPCLCYLSILKGKLSNTQIGLCIFIIVFGVVSGCCGTYSAISRLANQMTD.

The segment covering 1–16 (MKLDEEFLHDRDHSFL) has biased composition (basic and acidic residues). A disordered region spans residues 1-99 (MKLDEEFLHD…FMPQSSSRRL (99 aa)). The span at 84–99 (TPPSVSFMPQSSSRRL) shows a compositional bias: polar residues. Transmembrane regions (helical) follow at residues 164–184 (SVLN…PYAI), 189–209 (WLGL…GVLM), 236–256 (FIIS…YIIM), 264–286 (LFPN…IFAI), 308–328 (SVGG…VGAV), 345–365 (LPVT…FPNI), 375–395 (FPLV…AVAV), 424–444 (VWTA…PIVM), 459–479 (GVSI…ALSV), 481–501 (FFAI…ALIF), and 521–541 (LCIF…YSAI).

It belongs to the amino acid/polyamine transporter 2 family. Amino acid/auxin permease (AAAP) (TC 2.A.18.5) subfamily.

Its subcellular location is the membrane. In Arabidopsis thaliana (Mouse-ear cress), this protein is Amino acid transporter AVT1D.